A 486-amino-acid chain; its full sequence is Histone acetyltransferase type B catalytic subunit DDB_G0274269 (486 aa).

Residues 27-69 (DIEELKNKDNKENKDKENKAHIKDEGEEEEQKEKKEEEEKEDD) are a coiled coil. Over residues 33-50 (NKDNKENKDKENKAHIKD) the composition is skewed to basic and acidic residues. The interval 33–78 (NKDNKENKDKENKAHIKDEGEEEEQKEKKEEEEKEDDGGPISFHPT) is disordered. In terms of domain architecture, N-acetyltransferase spans 189–386 (VVFRYHEKLQ…YRISIKKRLY (198 aa)). Acetyl-CoA contacts are provided by residues 260–262 (YLI) and 267–273 (QRMGHGK). Glutamate 299 serves as the catalytic Proton donor/acceptor. The stretch at 392-481 (DSEQIEKIKQ…KNYHKTLSSL (90 aa)) forms a coiled coil.

This sequence belongs to the HAT1 family.

The enzyme catalyses L-lysyl-[protein] + acetyl-CoA = N(6)-acetyl-L-lysyl-[protein] + CoA + H(+). This is Histone acetyltransferase type B catalytic subunit DDB_G0274269 from Dictyostelium discoideum (Social amoeba).